Reading from the N-terminus, the 156-residue chain is MDTLHEHEAGNLYEEQRVDRVGDALTADAGDDADTLEDGQQQQQQQHQQLLGVNRQMAILLDAPQEPPMAVFPARGGLNGPPRLRKKRSFYTMVKPSPPCESQEPEMCLLLASVTRAMRQVREDQRGEYFANYLVENMTSQNYPNGVGLPQHWGEF.

A disordered region spans residues 26–48; that stretch reads TADAGDDADTLEDGQQQQQQQHQ. N-linked (GlcNAc...) asparagine glycosylation occurs at Asn137.

Belongs to the male-specific scotti family.

In terms of biological role, post-meiotically transcribed gene that has a role in late spermiogenesis; required for actin cone progression during spermatid individualization. In Drosophila erecta (Fruit fly), this protein is Male-specific protein scotti.